The chain runs to 354 residues: Protein RecA (354 aa).

67–74 lines the ATP pocket; that stretch reads GPESSGKT. Residues 333–354 form a disordered region; it reads MNEFVPSSEEQAEASLSEDHDQ.

This sequence belongs to the RecA family.

Its subcellular location is the cytoplasm. Its function is as follows. Can catalyze the hydrolysis of ATP in the presence of single-stranded DNA, the ATP-dependent uptake of single-stranded DNA by duplex DNA, and the ATP-dependent hybridization of homologous single-stranded DNAs. It interacts with LexA causing its activation and leading to its autocatalytic cleavage. The sequence is that of Protein RecA from Laribacter hongkongensis (strain HLHK9).